A 640-amino-acid chain; its full sequence is Acid beta-fructofuranosidase 2, vacuolar (640 aa).

The segment at 1–22 (MDTNTTSYTPLPGDPFLSGPPE) is disordered. At 1 to 29 (MDTNTTSYTPLPGDPFLSGPPETPRRPLK) the chain is on the cytoplasmic side. Positions 1-78 (MDTNTTSYTP…HPQSTTNTML (78 aa)) are cleaved as a propeptide — removed in mature form. The chain crosses the membrane as a helical span at residues 30 to 49 (GFAVIFASVIFLMSLVALII). Topologically, residues 50 to 616 (HQGPQQPPDV…FSPDAASHSS (567 aa)) are lumenal. Substrate-binding positions include 93-96 (WMND), Gln-112, Trp-120, 155-156 (WT), 219-220 (RD), Glu-274, and Asp-307. The active site involves Asp-96. Cys-464 and Cys-512 are disulfide-bonded. A helical transmembrane segment spans residues 617 to 639 (FTPVTVFIKFIVPFGIFLTLYFV). A topological domain (cytoplasmic) is located at residue Arg-640.

This sequence belongs to the glycosyl hydrolase 32 family. As to expression, expressed in buds, stems, roots and leaves.

Its subcellular location is the membrane. The protein resides in the vacuole membrane. The catalysed reaction is Hydrolysis of terminal non-reducing beta-D-fructofuranoside residues in beta-D-fructofuranosides.. Functionally, vacuolar invertase. In Rosa hybrid cultivar, this protein is Acid beta-fructofuranosidase 2, vacuolar.